The chain runs to 354 residues: DNA integrity scanning protein DisA (354 aa).

In terms of domain architecture, DAC spans 6 to 144 (DDELKKILKI…GDIKYVLRDS (139 aa)). ATP contacts are provided by residues Gly73, Leu91, and 104-108 (TRHRT).

The protein belongs to the DisA family. In terms of assembly, homooctamer. Requires Mg(2+) as cofactor.

It catalyses the reaction 2 ATP = 3',3'-c-di-AMP + 2 diphosphate. Functionally, participates in a DNA-damage check-point that is active prior to asymmetric division when DNA is damaged. DisA forms globular foci that rapidly scan along the chromosomes during sporulation, searching for lesions. When a lesion is present, DisA pauses at the lesion site. This triggers a cellular response that culminates in a temporary block in sporulation initiation. Also has diadenylate cyclase activity, catalyzing the condensation of 2 ATP molecules into cyclic di-AMP (c-di-AMP). c-di-AMP acts as a signaling molecule that couples DNA integrity with progression of sporulation. The rise in c-di-AMP level generated by DisA while scanning the chromosome, operates as a positive signal that advances sporulation; upon encountering a lesion, the DisA focus arrests at the damaged site and halts c-di-AMP synthesis. This Clostridium perfringens (strain SM101 / Type A) protein is DNA integrity scanning protein DisA.